The following is a 289-amino-acid chain: Cyclin-dependent kinase inhibitor 4 (289 aa).

3 disordered regions span residues 1-31 (MGKY…ESSI), 56-160 (LQQQ…VSES), and 227-248 (SESN…TTPE). A compositionally biased stretch (gly residues) spans 13 to 28 (AGAGAGGGGGGGGGGE). A compositionally biased stretch (low complexity) spans 56-80 (LQQQQQRCLLQKPSSPSSLPPTSAS). A compositionally biased stretch (polar residues) spans 134-144 (CGRNPNPRSNL).

It belongs to the CDI family. ICK/KRP subfamily. In terms of assembly, specifically interacts with CDKA-1, but not with CDKB1-1. Interacts with CYCD4-1. Binds to FBL17. Expressed in leaves and flowers and at lower levels in roots.

The protein localises to the nucleus. Its subcellular location is the nucleoplasm. In terms of biological role, binds and inhibits CYCD2-1/CDKA-1 complex kinase activity. May target specifically CDKA-1. This is Cyclin-dependent kinase inhibitor 4 (KRP4) from Arabidopsis thaliana (Mouse-ear cress).